The primary structure comprises 268 residues: tRNA (guanine-N(7)-)-methyltransferase (268 aa).

The segment at 1–21 is disordered; sequence MMAGAEAPQPQKRYYRQRAHS. Ser-21 carries the post-translational modification Phosphoserine. Gly-78, Glu-101, Arg-103, Asn-134, Ala-135, and Leu-154 together coordinate S-adenosyl-L-methionine. Residue Asp-157 is part of the active site. Residues 158–166 form an alphaC helix region; the sequence is PHFKRTKHK. S-adenosyl-L-methionine is bound by residues Thr-232 and Glu-234. An alpha6 helix region spans residues 232–240; that stretch reads TEEGKKVLR.

The protein belongs to the class I-like SAM-binding methyltransferase superfamily. TrmB family. Catalytic component of the METTL1-WDR4 complex, composed of METTL1 and WDR4. Post-translationally, phosphorylation at Ser-21 by PKB/AKT1 inactivates its methyltransferase activity via a steric interference mechanism in the active site that locally disrupts the catalytic center. Phosphorylation at Ser-21 does not affect the interaction with WDR4.

Its subcellular location is the nucleus. The enzyme catalyses guanosine(46) in tRNA + S-adenosyl-L-methionine = N(7)-methylguanosine(46) in tRNA + S-adenosyl-L-homocysteine. The catalysed reaction is a guanosine in mRNA + S-adenosyl-L-methionine = an N(7)-methylguanosine in mRNA + S-adenosyl-L-homocysteine. It carries out the reaction a guanosine in miRNA + S-adenosyl-L-methionine = an N(7)-methylguanosine in miRNA + S-adenosyl-L-homocysteine. Its pathway is tRNA modification; N(7)-methylguanine-tRNA biosynthesis. Its function is as follows. Catalytic component of METTL1-WDR4 methyltransferase complex that mediates the formation of N(7)-methylguanine in a subset of RNA species, such as tRNAs, mRNAs and microRNAs (miRNAs). Catalyzes the formation of N(7)-methylguanine at position 46 (m7G46) in a large subset of tRNAs that contain the 5'-RAGGU-3' motif within the variable loop. M7G46 interacts with C13-G22 in the D-loop to stabilize tRNA tertiary structure and protect tRNAs from decay. Also acts as a methyltransferase for a subset of internal N(7)-methylguanine in mRNAs. Internal N(7)-methylguanine methylation of mRNAs in response to stress promotes their relocalization to stress granules, thereby suppressing their translation. Also methylates a specific subset of miRNAs, such as let-7. N(7)-methylguanine methylation of let-7 miRNA promotes let-7 miRNA processing by disrupting an inhibitory secondary structure within the primary miRNA transcript (pri-miRNA). Acts as a regulator of embryonic stem cell self-renewal and differentiation. The protein is tRNA (guanine-N(7)-)-methyltransferase of Mus musculus (Mouse).